The sequence spans 216 residues: MOB kinase activator 1A (216 aa).

The residue at position 2 (Ser-2) is an N-acetylserine. Thr-12 and Thr-35 each carry phosphothreonine. Position 74 is a phosphothreonine; by STK3/MST2 (Thr-74). 4 residues coordinate Zn(2+): Cys-79, Cys-84, His-161, and His-166. Thr-181 carries the post-translational modification Phosphothreonine.

It belongs to the MOB1/phocein family. In terms of assembly, binds STK38 and STK38L. Interacts with LATS1 and LATS2. Forms a tripartite complex with STK38 and STK3/MST2. In terms of processing, phosphorylated by STK3/MST2 and STK4/MST1 and this phosphorylation enhances its binding to LATS1. Adrenal gland, bone marrow, brain, placenta, prostate, salivary gland, skeletal muscle, testis, thymus, thyroid gland, heart, spinal cord, fetal brain and fetal liver.

Functionally, activator of LATS1/2 in the Hippo signaling pathway which plays a pivotal role in organ size control and tumor suppression by restricting proliferation and promoting apoptosis. The core of this pathway is composed of a kinase cascade wherein STK3/MST2 and STK4/MST1, in complex with its regulatory protein SAV1, phosphorylates and activates LATS1/2 in complex with its regulatory protein MOB1, which in turn phosphorylates and inactivates YAP1 oncoprotein and WWTR1/TAZ. Phosphorylation of YAP1 by LATS1/2 inhibits its translocation into the nucleus to regulate cellular genes important for cell proliferation, cell death, and cell migration. Stimulates the kinase activity of STK38 and STK38L. Acts cooperatively with STK3/MST2 to activate STK38. The sequence is that of MOB kinase activator 1A from Homo sapiens (Human).